The following is a 164-amino-acid chain: UPF0303 protein R02983 (164 aa).

It belongs to the UPF0303 family.

The polypeptide is UPF0303 protein R02983 (Rhizobium meliloti (strain 1021) (Ensifer meliloti)).